A 471-amino-acid chain; its full sequence is MKKTLYEKIYDAHIVHEEKNNASILYIDLHLLHEVTSPQAFDSLRIKNRVVRQPKKTFATMDHNVSTESKDINASGSMAKIQMQQLIRNCNQFNISLYDLNNPKQGIVHVIGPEQGMTLPGMTIVCGDSHTSTHGAFGALSFGIGTSEVEHVLVTQTLKQQRLKNMKIQIKGKIKNFVTAKDIILFIIGKLGTSGGSGYVIEFCGDVIKKMNMEERMTVCNMAIEMGAKSALIAPDETTFLYLKGRRYSPQGKFWEEAVKYWKTLITRSKAFFDKEFTFDVSNLSPQITWGTSPDQVLSINEKIPDFNFFKDSVKKNLARSACDYMNLKPGSYLTDIKIDKVFIGSCTNSRIEDLRSAAKILKNKKISKNIKAILLPGSGTGTVKKPAEKEGLDKIFIDAGFEWRLPGCSMCLGMNNDKLSDGERCASTSNRNFEGRQGRGGRTHLVSPIMAAAAIYGRFIDVRNLDSETN.

[4Fe-4S] cluster contacts are provided by Cys-347, Cys-409, and Cys-412.

The protein belongs to the aconitase/IPM isomerase family. LeuC type 1 subfamily. In terms of assembly, heterodimer of LeuC and LeuD. The cofactor is [4Fe-4S] cluster.

The enzyme catalyses (2R,3S)-3-isopropylmalate = (2S)-2-isopropylmalate. It participates in amino-acid biosynthesis; L-leucine biosynthesis; L-leucine from 3-methyl-2-oxobutanoate: step 2/4. Functionally, catalyzes the isomerization between 2-isopropylmalate and 3-isopropylmalate, via the formation of 2-isopropylmaleate. This Buchnera aphidicola subsp. Rhopalosiphum padi protein is 3-isopropylmalate dehydratase large subunit.